We begin with the raw amino-acid sequence, 314 residues long: Cathepsin L 2 (314 aa).

The signal sequence occupies residues 1 to 24; that stretch reads MMLLGASLYLNNTQEVSDEIDTAN. Residues 25–109 constitute a propeptide, activation peptide; the sequence is LYANWKMKYN…NASNANFQYK (85 aa). Disulfide bonds link Cys-132–Cys-175, Cys-166–Cys-207, and Cys-259–Cys-302. The active site involves Cys-135. Active-site residues include His-265 and Asn-282.

It belongs to the peptidase C1 family.

The protein resides in the secreted. It catalyses the reaction Specificity close to that of papain. As compared to cathepsin B, cathepsin L exhibits higher activity toward protein substrates, but has little activity on Z-Arg-Arg-NHMec, and no peptidyl-dipeptidase activity.. Functionally, may be involved in extracellular digestion. In Paramecium tetraurelia, this protein is Cathepsin L 2.